Here is a 515-residue protein sequence, read N- to C-terminus: Alpha-1B adrenergic receptor (515 aa).

Residues 1–45 (MNPDLDTGHNTSAPAHWGELKDDNFTGPNQTSSNSTLPQLDVTRA) lie on the Extracellular side of the membrane. 3 N-linked (GlcNAc...) asparagine glycosylation sites follow: asparagine 10, asparagine 24, and asparagine 34. The helical transmembrane segment at 46–70 (ISVGLVLGAFILFAIVGNILVILSV) threads the bilayer. Residues 71–83 (ACNRHLRTPTNYF) lie on the Cytoplasmic side of the membrane. The chain crosses the membrane as a helical span at residues 84 to 105 (IVNLAIADLLLSFTVLPFSATL). Topologically, residues 106 to 115 (EVLGYWVLGR) are extracellular. A helical membrane pass occupies residues 116 to 141 (IFCDIWAAVDVLCCTASILSLCAISI). Cysteine 118 and cysteine 195 form a disulfide bridge. Residues 142–161 (DRYIGVRYSLQYPTLVTRRK) are Cytoplasmic-facing. Residues 162–182 (AILALLSVWVLSTVISIGPLL) form a helical membrane-spanning segment. The Extracellular segment spans residues 183–201 (GWKEPAPNDDKECGVTEEP). A helical membrane pass occupies residues 202 to 224 (FYALFSSLGSFYIPLAVILVMYC). At 225 to 295 (RVYIVAKRTT…FSREKKAAKT (71 aa)) the chain is on the cytoplasmic side. The residue at position 264 (threonine 264) is a Phosphothreonine. A helical membrane pass occupies residues 296 to 319 (LGIVVGMFILCWLPFFIALPLGSL). Over 320 to 326 (FSTLKPP) the chain is Extracellular. A helical transmembrane segment spans residues 327–351 (DAVFKVVFWLGYFNSCLNPIIYPCS). The Cytoplasmic portion of the chain corresponds to 352-515 (SKEFKRAFMR…SNMPLAPGHF (164 aa)). Cysteine 365 is lipidated: S-palmitoyl cysteine. A Nuclear localization signal motif is present at residues 368–378 (RGGRRRRRRRR). Disordered stretches follow at residues 392-430 (GGSL…GYLG) and 474-515 (LGDP…PGHF). Polar residues-rich tracts occupy residues 410-424 (SCMS…SASP) and 484-498 (GDTS…TDLA).

It belongs to the G-protein coupled receptor 1 family. Adrenergic receptor subfamily. ADRA1B sub-subfamily. Homo- and heterooligomer. Heterooligomerizes with ADRA1B homooligomers in cardiac myocytes. Interacts with CAVIN4.

It localises to the nucleus membrane. It is found in the cell membrane. The protein resides in the cytoplasm. Its subcellular location is the membrane. The protein localises to the caveola. Functionally, this alpha-adrenergic receptor mediates its action by association with G proteins that activate a phosphatidylinositol-calcium second messenger system. Its effect is mediated by G(q) and G(11) proteins. Nuclear ADRA1A-ADRA1B heterooligomers regulate phenylephrine (PE)-stimulated ERK signaling in cardiac myocytes. This is Alpha-1B adrenergic receptor (Adra1b) from Rattus norvegicus (Rat).